Consider the following 160-residue polypeptide: Transcription elongation factor GreA (160 aa).

Positions 49–73 (HAAKEEQSHNEGRIADLEDKLARAD) form a coiled coil.

It belongs to the GreA/GreB family.

Necessary for efficient RNA polymerase transcription elongation past template-encoded arresting sites. The arresting sites in DNA have the property of trapping a certain fraction of elongating RNA polymerases that pass through, resulting in locked ternary complexes. Cleavage of the nascent transcript by cleavage factors such as GreA or GreB allows the resumption of elongation from the new 3'terminus. GreA releases sequences of 2 to 3 nucleotides. The sequence is that of Transcription elongation factor GreA from Rhodopseudomonas palustris (strain BisA53).